The following is a 73-amino-acid chain: Beta-defensin 108B (73 aa).

Positions 1–22 (MRIAVLLFAIFFFMSQVLPARG) are cleaved as a signal peptide. Cystine bridges form between Cys28–Cys55, Cys35–Cys49, and Cys39–Cys56.

Belongs to the beta-defensin family. Specifically expressed in testis. Low expression is detected also in liver.

The protein resides in the secreted. Has antibacterial activity. The chain is Beta-defensin 108B (DEFB108B) from Homo sapiens (Human).